A 201-amino-acid chain; its full sequence is Mediator of RNA polymerase II transcription subunit 19 (201 aa).

A disordered region spans residues 166–201 (GTGKSNAKKRKNRSNGSSMATPNSEMQDDVKRRRLE).

It belongs to the Mediator complex subunit 19 family. In terms of assembly, component of the Mediator complex.

Its subcellular location is the nucleus. Component of the Mediator complex, a coactivator involved in the regulated transcription of nearly all RNA polymerase II-dependent genes. Mediator functions as a bridge to convey information from gene-specific regulatory proteins to the basal RNA polymerase II transcription machinery. Mediator is recruited to promoters by direct interactions with regulatory proteins and serves as a scaffold for the assembly of a functional preinitiation complex with RNA polymerase II and the general transcription factors. This is Mediator of RNA polymerase II transcription subunit 19 (ROX3) from Candida glabrata (strain ATCC 2001 / BCRC 20586 / JCM 3761 / NBRC 0622 / NRRL Y-65 / CBS 138) (Yeast).